The primary structure comprises 443 residues: Serine/threonine-protein kinase Nek2 (443 aa).

In terms of domain architecture, Protein kinase spans 8 to 271 (YEVLHSIGTG…VEEILESPLI (264 aa)). ATP is bound by residues 14–22 (IGTGSYGRC) and Lys37. The active-site Proton acceptor is the Asp141. Residue Thr170 is modified to Phosphothreonine; by autocatalysis. Ser171 carries the post-translational modification Phosphoserine; by autocatalysis. Residues Thr175 and Thr179 each carry the phosphothreonine; by autocatalysis modification. Ser184 carries the post-translational modification Phosphoserine. Residue Ser241 is modified to Phosphoserine; by autocatalysis. Residues 264-443 (EILESPLIAD…LKSRQILGMR (180 aa)) form an interaction with PCNT region. Basic and acidic residues predominate over residues 282–292 (NLERRGRRSGE). A disordered region spans residues 282–303 (NLERRGRRSGEPSKLPDSSPVL). Phosphoserine is present on Ser300. Residues 301 to 443 (PVLSELKLKE…LKSRQILGMR (143 aa)) are interaction with CEP85. Residues 303-361 (LSELKLKERQLQDREQALRAREDILEQKERELCIRERLAEDKLARAESLMKNYSLLKEH) are a coiled coil. Residues 306-334 (LKLKERQLQDREQALRAREDILEQKEREL) are leucine-zipper. A necessary for interaction with MAD1L1 region spans residues 329–443 (QKERELCIRE…LKSRQILGMR (115 aa)). The required for microtubule binding and for localization to the centrosomes stretch occupies residues 333–370 (ELCIRERLAEDKLARAESLMKNYSLLKEHRLLCLAGGP). Ser356 is modified (phosphoserine; by STK3/MST2). Positions 383–402 (VHFHGESKENTARSENSESY) are disordered. Positions 385–398 (FHGESKENTARSEN) are enriched in basic and acidic residues. A phosphoserine mark is found at Ser389, Ser396, and Ser401. The interval 402–437 (YLAKSKCRDLKKRLHAAQLRAQALADIEKNYQLKSR) is interaction with SAV1 and STK3/MST2. Positions 403-427 (LAKSKCRDLKKRLHAAQLRAQALAD) form a coiled coil. A Phosphoserine; by STK3/MST2 modification is found at Ser436.

This sequence belongs to the protein kinase superfamily. NEK Ser/Thr protein kinase family. NIMA subfamily. As to quaternary structure, forms homodimers and heterodimers. Interacts with CDC20, CTNB1, MAD1L1, MAD2L1, MAPK, NEK11, NPM1, NDC80, PCNT, PPP1CA, PPP1CC and SGO1. Interacts with STK3/MST2 (via SARAH domain) and SAV1 (via SARAH domain). Interacts with NECAB3 and HMGA2. Interacts with CEP68; the interaction leads to phosphorylation of CEP68. Interacts with CNTLN; the interaction leads to phosphorylation of CNTLN. Interacts with CEP85. Requires Mg(2+) as cofactor. Post-translationally, activated by autophosphorylation. Protein phosphatase 1 represses autophosphorylation and activation of isoform 1 by dephosphorylation. Phosphorylation by STK3/MST2 is necessary for its localization to the centrosome. As to expression, most abundantly expressed in testis. Low levels found in mid-gestation embryo, ovary, placenta, intestine, thymus and skin. Within the testis, expression restricted to germ cells with highest levels detected in spermatocytes at pachytene and diplotene stages. Also expressed in meiotic pachytene oocytes.

The protein localises to the nucleus. The protein resides in the nucleolus. Its subcellular location is the cytoplasm. It localises to the cytoskeleton. It is found in the microtubule organizing center. The protein localises to the centrosome. The protein resides in the spindle pole. Its subcellular location is the chromosome. It localises to the centromere. It is found in the kinetochore. It catalyses the reaction L-seryl-[protein] + ATP = O-phospho-L-seryl-[protein] + ADP + H(+). The enzyme catalyses L-threonyl-[protein] + ATP = O-phospho-L-threonyl-[protein] + ADP + H(+). Its activity is regulated as follows. Its catalytic activity is inhibited by the inhibitor CCT241950. In the presence of this inhibitor, displays an autoinhibited conformation: Tyr-70 side chain points into the active site, interacts with the activation loop, and blocks the alphaC helix. In terms of biological role, protein kinase which is involved in the control of centrosome separation and bipolar spindle formation in mitotic cells and chromatin condensation in meiotic cells. Regulates centrosome separation (essential for the formation of bipolar spindles and high-fidelity chromosome separation) by phosphorylating centrosomal proteins such as CROCC, CEP250 and NINL, resulting in their displacement from the centrosomes. Regulates kinetochore microtubule attachment stability in mitosis via phosphorylation of NDC80. Involved in regulation of mitotic checkpoint protein complex via phosphorylation of CDC20 and MAD2L1. Plays an active role in chromatin condensation during the first meiotic division through phosphorylation of HMGA2. Phosphorylates: PPP1CC; SGO1; NECAB3 and NPM1. Essential for localization of MAD2L1 to kinetochore and MAPK1 and NPM1 to the centrosome. Phosphorylates CEP68 and CNTLN directly or indirectly. NEK2-mediated phosphorylation of CEP68 promotes CEP68 dissociation from the centrosome and its degradation at the onset of mitosis. Phosphorylates and activates NEK11 in G1/S-arrested cells. Involved in the regulation of centrosome disjunction. In Mus musculus (Mouse), this protein is Serine/threonine-protein kinase Nek2 (Nek2).